Consider the following 65-residue polypeptide: Large ribosomal subunit protein uL29 (65 aa).

This sequence belongs to the universal ribosomal protein uL29 family.

The chain is Large ribosomal subunit protein uL29 from Dehalococcoides mccartyi (strain ATCC BAA-2100 / JCM 16839 / KCTC 5957 / BAV1).